Reading from the N-terminus, the 117-residue chain is Large ribosomal subunit protein bL20 (117 aa).

The protein belongs to the bacterial ribosomal protein bL20 family.

Its function is as follows. Binds directly to 23S ribosomal RNA and is necessary for the in vitro assembly process of the 50S ribosomal subunit. It is not involved in the protein synthesizing functions of that subunit. In Symbiobacterium thermophilum (strain DSM 24528 / JCM 14929 / IAM 14863 / T), this protein is Large ribosomal subunit protein bL20.